Consider the following 262-residue polypeptide: LysM and putative peptidoglycan-binding domain-containing protein 3 (262 aa).

Topologically, residues 1–218 are extracellular; it reads MSGRIPNHGY…PYHGADWSLG (218 aa). The 45-residue stretch at 70-114 folds into the LysM domain; it reads ISRDICEGDTLNSIALQYCCTVADLKRANNFLNEQDFFALRTIKI. A helical transmembrane segment spans residues 219-239; the sequence is WWTAVAIMVFVGIITPLFYFL. The Cytoplasmic segment spans residues 240-262; it reads YYEVLMKVNTSHTLNSIEKSGPS.

It localises to the cell membrane. Its subcellular location is the golgi apparatus. In terms of biological role, essential for Golgi structural integrity. The polypeptide is LysM and putative peptidoglycan-binding domain-containing protein 3 (lysmd3) (Xenopus tropicalis (Western clawed frog)).